A 379-amino-acid polypeptide reads, in one-letter code: Protein FAM53B (379 aa).

2 disordered regions span residues 206-257 (CPAE…HKQR) and 302-348 (AQND…AGKE). Residues 212-236 (SPESTPELQRRSGQSGLARSRSQPC) show a composition bias toward polar residues. The span at 239-249 (NHQKIGVKRRR) shows a compositional bias: basic residues. The Nuclear localization signal signature appears at 246–249 (KRRR). Polar residues predominate over residues 326–342 (QSDSSSADALIHQSESS).

It belongs to the FAM53 family. In terms of assembly, interacts with ctnnb1. As to expression, mainly expressed in proliferating tissues.

The protein localises to the nucleus. In terms of biological role, acts as a regulator of Wnt signaling pathway by regulating beta-catenin (ctnnb1) nuclear localization. Required for appendage regeneration by regulating cell proliferation. This is Protein FAM53B from Danio rerio (Zebrafish).